We begin with the raw amino-acid sequence, 164 residues long: MPSFDFTSEADMVGLKNAIDVTSRQIDNRYDFKGTSAKVELNEKDKVITLWGDSDFQLDQIKDLLFPAMEKKEKESVKRLDHQKVVSVSGNKVKQEMKIKDGIDSDLAKKIVKLVKDGKLKVQASIQGDTVRVQGAKRDDLQGCIALITKSITDFPIKYGNFRD.

The protein belongs to the YajQ family.

In terms of biological role, nucleotide-binding protein. This is Nucleotide-binding protein Daro_3028 from Dechloromonas aromatica (strain RCB).